A 599-amino-acid chain; its full sequence is Elongation factor 4 (599 aa).

Positions 4 to 186 (DNIRNFSIIA…EIVNKIPPPR (183 aa)) constitute a tr-type G domain. GTP contacts are provided by residues 16–21 (DHGKST) and 133–136 (NKID).

This sequence belongs to the TRAFAC class translation factor GTPase superfamily. Classic translation factor GTPase family. LepA subfamily.

It is found in the cell inner membrane. The enzyme catalyses GTP + H2O = GDP + phosphate + H(+). Its function is as follows. Required for accurate and efficient protein synthesis under certain stress conditions. May act as a fidelity factor of the translation reaction, by catalyzing a one-codon backward translocation of tRNAs on improperly translocated ribosomes. Back-translocation proceeds from a post-translocation (POST) complex to a pre-translocation (PRE) complex, thus giving elongation factor G a second chance to translocate the tRNAs correctly. Binds to ribosomes in a GTP-dependent manner. This Geotalea daltonii (strain DSM 22248 / JCM 15807 / FRC-32) (Geobacter daltonii) protein is Elongation factor 4.